Consider the following 420-residue polypeptide: F-box/LRR-repeat protein At2g43260 (420 aa).

One can recognise an F-box domain in the interval 7–53; sequence NPNSIDILPELLEEVLLRLPTKSILKCRIVSKQWRSLLESSRFAERH. LRR repeat units follow at residues 112–135 and 226–251; these read QDWIIVLNPSTSQLRRFPSGLNHN and VYRILALDLHKEEFHKVPVPPTQITV.

This chain is F-box/LRR-repeat protein At2g43260, found in Arabidopsis thaliana (Mouse-ear cress).